We begin with the raw amino-acid sequence, 256 residues long: Hemin import ATP-binding protein HmuV (256 aa).

The region spanning 2-238 (ISAQNLVYSL…QELTMLYGAD (237 aa)) is the ABC transporter domain. Position 34–41 (34–41 (GPNGAGKS)) interacts with ATP.

This sequence belongs to the ABC transporter superfamily. Heme (hemin) importer (TC 3.A.1.14.5) family. The complex is composed of two ATP-binding proteins (HmuV), two transmembrane proteins (HmuU) and a solute-binding protein (HmuT).

The protein resides in the cell inner membrane. Its function is as follows. Part of the ABC transporter complex HmuTUV involved in hemin import. Responsible for energy coupling to the transport system. The polypeptide is Hemin import ATP-binding protein HmuV (Shigella dysenteriae).